The sequence spans 236 residues: Probable sulfate/thiosulfate import ATP-binding protein CysA (236 aa).

An ABC transporter domain is found at isoleucine 3–leucine 233. Glycine 35–serine 42 is an ATP binding site.

The protein belongs to the ABC transporter superfamily. Sulfate/tungstate importer (TC 3.A.1.6) family.

It is found in the plastid. The protein resides in the chloroplast. It catalyses the reaction sulfate(out) + ATP + H2O = sulfate(in) + ADP + phosphate + H(+). The catalysed reaction is thiosulfate(out) + ATP + H2O = thiosulfate(in) + ADP + phosphate + H(+). Functionally, part of the ABC transporter complex involved in sulfate/thiosulfate import. Responsible for energy coupling to the transport system. The protein is Probable sulfate/thiosulfate import ATP-binding protein CysA of Chlorella vulgaris (Green alga).